The primary structure comprises 417 residues: Acid phosphatase (417 aa).

The N-terminal stretch at 1–19 is a signal peptide; it reads MFTKQSLVTLLGGLSLAVA. N-linked (GlcNAc...) asparagine glycosylation is found at Asn122, Asn187, and Asn209. Asp216 acts as the Proton donor in catalysis. Asn218, Asn333, and Asn383 each carry an N-linked (GlcNAc...) asparagine glycan.

Post-translationally, the N-terminus is blocked.

It localises to the secreted. It catalyses the reaction a phosphate monoester + H2O = an alcohol + phosphate. In Aspergillus niger, this protein is Acid phosphatase (phoA).